The chain runs to 346 residues: Probable electron transfer flavoprotein subunit alpha, mitochondrial (346 aa).

Position 285 to 313 (285 to 313 (LYVAIGISGAIQHLAGMKESKMIIAINKD)) interacts with FAD.

The protein belongs to the ETF alpha-subunit/FixB family. As to quaternary structure, heterodimer of an alpha and a beta subunit. The cofactor is FAD.

It localises to the mitochondrion matrix. In terms of biological role, the electron transfer flavoprotein serves as a specific electron acceptor for several dehydrogenases, including five acyl-CoA dehydrogenases, glutaryl-CoA and sarcosine dehydrogenase. It transfers the electrons to the main mitochondrial respiratory chain via ETF-ubiquinone oxidoreductase (ETF dehydrogenase). The protein is Probable electron transfer flavoprotein subunit alpha, mitochondrial (ETF1) of Cryptococcus gattii serotype B (strain WM276 / ATCC MYA-4071) (Filobasidiella gattii).